A 276-amino-acid chain; its full sequence is Glutamate racemase (276 aa).

Substrate contacts are provided by residues 10–11 and 42–43; these read DS and YG. Cys-74 serves as the catalytic Proton donor/acceptor. 75–76 is a substrate binding site; sequence NT. Cys-185 serves as the catalytic Proton donor/acceptor. Residue 186-187 participates in substrate binding; it reads TH.

Belongs to the aspartate/glutamate racemases family.

It carries out the reaction L-glutamate = D-glutamate. It functions in the pathway cell wall biogenesis; peptidoglycan biosynthesis. In terms of biological role, provides the (R)-glutamate required for cell wall biosynthesis. The chain is Glutamate racemase from Levilactobacillus brevis (Lactobacillus brevis).